Reading from the N-terminus, the 304-residue chain is Capsid protein (304 aa).

2 stretches are compositionally biased toward basic and acidic residues: residues M1–R24 and F32–L54. The tract at residues M1 to L54 is disordered.

Belongs to the potexviruses coat protein family.

It localises to the virion. Functionally, required for genome encapsidation. Forms ribonucleoprotein complexes along with TGB1 helicase and viral RNA. This Potato virus M (strain Russian) (PVM) protein is Capsid protein.